A 1170-amino-acid chain; its full sequence is Thrombospondin-1 (1170 aa).

The signal sequence occupies residues 1–18 (MGLAWGLGVLLLLHACGS). The interval 47–95 (RLVKGPDPSSPAFRIEDANLIPPVPDKKFQDLVDAVRAEKGFLLLASLR) is heparin-binding. One can recognise a Laminin G-like domain in the interval 65–270 (NLIPPVPDKK…HKTKDLQAIC (206 aa)). A disulfide bridge connects residues Cys171 and Cys232. N-linked (GlcNAc...) asparagine glycans are attached at residues Asn248 and Asn360. The region spanning 316-373 (PLCYHNGVQYRTGDEWTVDSCTECRCQNSVTICKKVSCPIMPCSNATVPDGECCPRCW) is the VWFC domain. TSP type-1 domains lie at 379–429 (DDGW…QECD), 435–490 (DGGW…DSCP), and 492–547 (NGGW…QDCP). 27 disulfide bridges follow: Cys391–Cys423, Cys395–Cys428, Cys406–Cys413, Cys447–Cys484, Cys451–Cys489, Cys462–Cys474, Cys504–Cys541, Cys508–Cys546, Cys519–Cys531, Cys551–Cys562, Cys556–Cys572, Cys575–Cys586, Cys592–Cys608, Cys599–Cys617, Cys620–Cys644, Cys650–Cys663, Cys657–Cys676, Cys678–Cys689, Cys705–Cys713, Cys718–Cys738, Cys754–Cys774, Cys777–Cys797, Cys813–Cys833, Cys836–Cys856, Cys874–Cys894, Cys910–Cys930, and Cys946–Cys1167. The region spanning 547–587 (PIDGCLSNPCFAGVQCTSYPDGSWKCGACPPGYSGDGVECK) is the EGF-like 1 domain. Residue Ser553 is glycosylated (O-linked (Xyl) serine). The EGF-like 2 domain occupies 646-690 (PRNPCTDGTHDCNKNAKCNYLGHYSDPMYRCECKPGYAGNGIICG). TSP type-3 repeat units follow at residues 691 to 726 (EDTD…NSGQ), 727 to 762 (EDYD…NPAQ), 763 to 785 (YDYD…NPDQ), 786 to 821 (ADTD…NVDQ), 822 to 844 (KDTD…NPDQ), 845 to 882 (LDSD…NANQ), 883 to 918 (ADHD…NPDQ), and 919 to 954 (KDSD…DISE). A glycan (N-linked (GlcNAc...) asparagine) is linked at Asn708. The disordered stretch occupies residues 839-944 (EHNPDQLDSD…DQDKVPDIDD (106 aa)). Basic and acidic residues-rich tracts occupy residues 840–854 (HNPD…RIGD), 883–894 (ADHDKDGKGDAC), and 917–941 (DQKD…KVPD). Positions 926–928 (RGD) match the Cell attachment site motif. A TSP C-terminal domain is found at 958 to 1170 (RRFQMIPLDP…SDLKYECRDS (213 aa)). Asn1067 and Asn1085 each carry an N-linked (GlcNAc...) asparagine glycan.

Belongs to the thrombospondin family. As to quaternary structure, homotrimer; disulfide-linked. Can bind to fibrinogen, fibronectin, laminin, type V collagen and integrins alpha-V/beta-1, alpha-V/beta-3 and alpha-IIb/beta-3. Binds heparin. Interacts (via the C-terminal domain) with CD47. Interacts (via the TSP type I repeats) with CD36; the interaction conveys an antiangiogenic effect. Interacts (via the TSP type I repeats) with HRG; the interaction blocks the antiangiogenic effect of THBS1 with CD36. Interacts with ATF6 (via lumenal domain). Interacts with FN1; this interaction is enhanced by TNFAIP6, which may act as a bridging molecule between FN1 and THBS1. Interacts with SIRPA; the interaction stimulates phosphorylation of SIRPA. As to expression, odontoblasts.

It is found in the secreted. The protein resides in the cell surface. Its subcellular location is the extracellular space. It localises to the extracellular matrix. The protein localises to the endoplasmic reticulum. It is found in the sarcoplasmic reticulum. Its function is as follows. Adhesive glycoprotein that mediates cell-to-cell and cell-to-matrix interactions. Multifunctional, involved in inflammation, angiogenesis, wound healing, reactive oxygen species (ROS) signaling, nitrous oxide (NO) signaling, apoptosis, senescence, aging, cellular self-renewal, stemness, and cardiovascular and metabolic homeostasis. Negatively modulates dendritic cell activation and cytokine release, as part of an autocrine feedback loop, contributing to the resolution of inflammation and immune homeostasis. Ligand for receptor CD47. Modulates nitrous oxide (NO) signaling via CD47, hence playing a role as a pressor agent, supporting blood pressure. Plays a role in endothelial cell senescence, acting via CD47, by increasing the abundance and activation of NADPH oxidase NOX1, and so generating excess ROS. Inhibits stem cell self-renewal, acting via CD47 signaling, probably by regulation of the stem cell transcription factors POU5F1/OCT4, SOX2, MYC/c-Myc and KLF4. Negatively modulates wound healing, acting via CD47. Ligand for receptor CD36. Involved in inducing apoptosis in podocytes in response to elevated free fatty acids, acting via CD36. Plays a role in suppressing angiogenesis, acting, depending on context, via CD36 or CD47. Promotes cellular senescence in a TP53-CDKN1A-RB1 signaling-dependent manner. Ligand for immunoglobulin-like cell surface receptor SIRPA. Involved in ROS signaling in non-phagocytic cells, stimulating NADPH oxidase-derived ROS production, acting via interaction with SIRPA. Plays a role in metabolic dysfunction in diet-induced obesity, perhaps acting by exacerbating adipose inflammatory activity; its effects may be mediated, at least in part, through enhanced adipocyte proliferation. Plays a role in ER stress response, via its interaction with the activating transcription factor 6 alpha (ATF6) which produces adaptive ER stress response factors. May be involved in age-related conditions, including metabolic dysregulation, during normal aging. This Bos taurus (Bovine) protein is Thrombospondin-1 (THBS1).